The primary structure comprises 1432 residues: MDTIGLDETTTIEINNNSNNKHSSYSSSSSNNNSNNLIISKIPNKIIDSNNNKNNNNNKNNNNNNNKNNYYNINKSSKMDMDYLLDCVQKTHGLIKDLTDSMLISNDQEERKQFQKQLNESNNYLNELLSKLSYIKNNNNINNNNNNGNINSNNGTSFGEIKSIPLMSNETGFTNNKITNNFNYSENKNNNNNNNNGQEQHELFSTSNKIENNNNNNNNKINNENNNEKNKNNNNGQHIIPKIYISDHEMAPNSEFQNIDSISPSSQLICGESRLTPVSERNELTSPASSLPSLPSLPSSMPKENKENKEPINQQEEEEEEEEEDEQKKEEENNLVKMTTVQVENTQEKIPLAKSATISTTNKTIEIEEQEKGMDSEKLKKTIKSSSSSSSNLFNDFPKPFIPFVQSNYNTEERNEVLQIVKLIHYEYGVQIKDKTGQLDNYMYNINFNPPPQYMCNSNDINSNNINSNINNNNNNMSNNLKKKLLIISNEKRNKMGPQIQRSPEETYLSNHFDEEELSNYFSHSFMSPKIVKSPSSSNLNKINQNNQNNNNNNIINNNNNNNNQNNTTTNNKNKSNNEKNNDNNTVFNNNTTTTNNNNNNNNNNSSEKNKVIVFEKKEPGQFIFKKEKVAKLSTSLSYSNLSSSSSNGGTAEDEEYDRYYDSFHCVELVDEDLLVYDNEDIYFNDEVDQNKSPLISPSLSKSNTTTTTTTTTTTTTATYANVNANAIATIGSSRKINNTLSPNMNNNNNNNNNNNNNNNNNNNNNNNNNNNNNNNSNNTSPTLTTQENNGISNGSGNGGRKIHYRSLSHGIIKTPFTNNKLKTLQIFVPTEPYTCRLEITIEENVTVERLLIEVIDLCIKERRKIQYHKRQKLQIQQLQLLQQPIITTTTTVAVQSNNNNNSSNNNNNNNNNNNNNMTSPINQSQSLTSSTTSSNISSSSSSNAFSPPTVSVSNQLISNNKNGNDFESLTFPFLIYTNHRDFILKKSDENGEIDQTLQPIIRTTEIKKLKTDCFSLVINPKAIRDTTHHPQIFRVHIIHSSNNINSNSNNNNNNNNNNNNNNNNNNNNYNNNNNNNCNNGIVKSISFSNIGEVDQSSSSIAPSSSTTAATAATSSTTKDSVAVVYKSSSTLASIKASICKKENLELNLCVFMTMSNEVIQNEKITLVELNLPSVKLVYDQIKPIQKSITPFQSEGVVGNAPRPITKLLGPIFFFTPDNICEIKQYVVSKIGKLGVKKDRYMEISKDKIMYSQFDYLPSSSVSQNGFHNNNNNNNKEYYGGGVGGGGGFTNYNNFSNANLNNNNNNSNFGNGNGNGGINGNNGNNSGSNNKENGGTGAGIGGGGGLQLPNNNNNNNTTPLKNNKFFRSFSSAVIKTPYQLINDISGVGIIINKPNSFYLKCNNKNSEYSSTDADEIVAKIQFIIRLKKENLI.

9 disordered regions span residues 1–72 (MDTI…NYYN), 208–237 (NKIE…NNGQ), 280–335 (ERNE…ENNL), 531–607 (IVKS…NNSS), 690–712 (QNKS…TTTT), 738–801 (NNTL…NGGR), 896–950 (QSNN…SPPT), 1044–1076 (NINS…NNNN), and 1303–1359 (NNNN…NTTP). 3 stretches are compositionally biased toward low complexity: residues 14 to 72 (INNN…NYYN), 208 to 225 (NKIE…NNEN), and 284 to 300 (LTSP…LPSS). Residues 315-325 (QEEEEEEEEED) show a composition bias toward acidic residues. Composition is skewed to low complexity over residues 536–575 (SSSN…NKNK), 583–607 (DNNT…NNSS), 691–712 (NKSP…TTTT), 744–779 (NMNN…NSNN), and 896–944 (QSNN…SSSN). Residues 1311-1320 (NGNGNGGING) are compositionally biased toward gly residues. Low complexity predominate over residues 1321-1333 (NNGNNSGSNNKEN). Residues 1334-1346 (GGTGAGIGGGGGL) show a composition bias toward gly residues. The segment covering 1347 to 1359 (QLPNNNNNNNTTP) has biased composition (low complexity).

This is an uncharacterized protein from Dictyostelium discoideum (Social amoeba).